The sequence spans 282 residues: 4-diphosphocytidyl-2-C-methyl-D-erythritol kinase (282 aa).

Residue lysine 9 is part of the active site. Residue 98–108 participates in ATP binding; that stretch reads PMGGGLGGGSS. The active site involves aspartate 140.

Belongs to the GHMP kinase family. IspE subfamily. In terms of assembly, homodimer.

The enzyme catalyses 4-CDP-2-C-methyl-D-erythritol + ATP = 4-CDP-2-C-methyl-D-erythritol 2-phosphate + ADP + H(+). It participates in isoprenoid biosynthesis; isopentenyl diphosphate biosynthesis via DXP pathway; isopentenyl diphosphate from 1-deoxy-D-xylulose 5-phosphate: step 3/6. Its function is as follows. Catalyzes the phosphorylation of the position 2 hydroxy group of 4-diphosphocytidyl-2C-methyl-D-erythritol. In Salmonella schwarzengrund (strain CVM19633), this protein is 4-diphosphocytidyl-2-C-methyl-D-erythritol kinase.